Here is a 159-residue protein sequence, read N- to C-terminus: Nucleotide-binding protein PLES_47741 (159 aa).

This sequence belongs to the YajQ family.

Its function is as follows. Nucleotide-binding protein. The sequence is that of Nucleotide-binding protein PLES_47741 from Pseudomonas aeruginosa (strain LESB58).